Here is a 121-residue protein sequence, read N- to C-terminus: Immunoglobulin kappa variable 4-1 (121 aa).

Residues Met-1 to Gly-20 form the signal peptide. The interval Asp-21–Cys-43 is framework-1. The region spanning Asp-21–Pro-121 is the Ig-like domain. Cys-43 and Cys-114 form a disulfide bridge. The segment at Lys-44–Ala-60 is complementarity-determining-1. Residues Trp-61 to Tyr-75 are framework-2. Residues Trp-76–Ser-82 are complementarity-determining-2. The segment at Gly-83–Cys-114 is framework-3. Positions Gln-115–Pro-121 are complementarity-determining-3.

Immunoglobulins are composed of two identical heavy chains and two identical light chains; disulfide-linked.

It localises to the secreted. The protein localises to the cell membrane. Functionally, v segment of the variable domain of immunoglobulins light chain that participates in the antigen recognition. Immunoglobulins, also known as antibodies, are membrane-bound or secreted glycoproteins produced by B lymphocytes. In the recognition phase of humoral immunity, the membrane-bound immunoglobulins serve as receptors which, upon binding of a specific antigen, trigger the clonal expansion and differentiation of B lymphocytes into immunoglobulins-secreting plasma cells. Secreted immunoglobulins mediate the effector phase of humoral immunity, which results in the elimination of bound antigens. The antigen binding site is formed by the variable domain of one heavy chain, together with that of its associated light chain. Thus, each immunoglobulin has two antigen binding sites with remarkable affinity for a particular antigen. The variable domains are assembled by a process called V-(D)-J rearrangement and can then be subjected to somatic hypermutations which, after exposure to antigen and selection, allow affinity maturation for a particular antigen. In Homo sapiens (Human), this protein is Immunoglobulin kappa variable 4-1.